Here is a 568-residue protein sequence, read N- to C-terminus: 2-succinyl-5-enolpyruvyl-6-hydroxy-3-cyclohexene-1-carboxylate synthase (568 aa).

This sequence belongs to the TPP enzyme family. MenD subfamily. As to quaternary structure, homodimer. Mg(2+) is required as a cofactor. Requires Mn(2+) as cofactor. Thiamine diphosphate serves as cofactor.

The enzyme catalyses isochorismate + 2-oxoglutarate + H(+) = 5-enolpyruvoyl-6-hydroxy-2-succinyl-cyclohex-3-ene-1-carboxylate + CO2. Its pathway is quinol/quinone metabolism; 1,4-dihydroxy-2-naphthoate biosynthesis; 1,4-dihydroxy-2-naphthoate from chorismate: step 2/7. It participates in quinol/quinone metabolism; menaquinone biosynthesis. Functionally, catalyzes the thiamine diphosphate-dependent decarboxylation of 2-oxoglutarate and the subsequent addition of the resulting succinic semialdehyde-thiamine pyrophosphate anion to isochorismate to yield 2-succinyl-5-enolpyruvyl-6-hydroxy-3-cyclohexene-1-carboxylate (SEPHCHC). The protein is 2-succinyl-5-enolpyruvyl-6-hydroxy-3-cyclohexene-1-carboxylate synthase of Haemophilus influenzae (strain PittEE).